A 120-amino-acid polypeptide reads, in one-letter code: Large ribosomal subunit protein bL19 (120 aa).

Belongs to the bacterial ribosomal protein bL19 family.

Its function is as follows. This protein is located at the 30S-50S ribosomal subunit interface and may play a role in the structure and function of the aminoacyl-tRNA binding site. The protein is Large ribosomal subunit protein bL19 of Chlorobium limicola (strain DSM 245 / NBRC 103803 / 6330).